The following is a 185-amino-acid chain: Gastrokine-1 (185 aa).

Positions 1–20 are cleaved as a signal peptide; that stretch reads MKFTIAFAGLLGVFLTPALA. A BRICHOS domain is found at 54-150; that stretch reads NNGWNSWNAL…MCKGIPTYMA (97 aa). An intrachain disulfide couples C81 to C142.

It belongs to the gastrokine family. Highly expressed specifically in surface cells of the antrum mucosa from where it is secreted.

The protein resides in the secreted. It is found in the cytoplasmic granule. Its subcellular location is the golgi apparatus. In terms of biological role, has mitogenic activity and may be involved in maintaining the integrity of the gastric mucosal epithelium. In Sus scrofa (Pig), this protein is Gastrokine-1 (GKN1).